A 108-amino-acid polypeptide reads, in one-letter code: VQ motif-containing protein 10 (108 aa).

The short motif at 29–38 (FKTVVQELTG) is the VQ element. The tract at residues 65-85 (IGEDTRQLHGGGGGGGRMGTT) is disordered. Positions 73–82 (HGGGGGGGRM) are enriched in gly residues.

As to quaternary structure, interacts with WRKY25, WRKY26 and WRKY33.

It is found in the nucleus. Functionally, may modulate WRKY transcription factor activities. The polypeptide is VQ motif-containing protein 10 (Arabidopsis thaliana (Mouse-ear cress)).